The chain runs to 122 residues: Large ribosomal subunit protein uL14c (122 aa).

The protein belongs to the universal ribosomal protein uL14 family. In terms of assembly, part of the 50S ribosomal subunit.

The protein resides in the plastid. The protein localises to the chloroplast. Binds to 23S rRNA. The chain is Large ribosomal subunit protein uL14c from Porphyra purpurea (Red seaweed).